Here is a 332-residue protein sequence, read N- to C-terminus: Cysteine and histidine-rich domain-containing protein 1 (332 aa).

The residue at position 2 (Ala2) is an N-acetylalanine. The tract at residues 2–77 is interaction with PPP5C; it reads ALLCYNRGCG…KPPEPVKPEV (76 aa). The Zn(2+) site is built by Cys5, Cys10, Cys24, His27, Cys42, and Cys43. 2 consecutive CHORD domains span residues 5 to 64 and 157 to 216; these read CYNR…KGRH and CKNG…TGKH. Phosphothreonine is present on Thr47. At Ser51 the chain carries Phosphoserine. 10 residues coordinate Zn(2+): Cys59, His64, Cys157, Cys162, Cys176, His179, Cys194, Cys195, Cys211, and His216. A disordered region spans residues 62-82; the sequence is GRHNSEKPPEPVKPEVKTTEK. Over residues 64–82 the composition is skewed to basic and acidic residues; sequence HNSEKPPEPVKPEVKTTEK. The interaction with HSP90AA1 and HSP90AB1 stretch occupies residues 65–316; that stretch reads NSEKPPEPVK…AEPMQWASLE (252 aa). A CS domain is found at 227–316; the sequence is VVPCRHDWHQ…AEPMQWASLE (90 aa).

As to quaternary structure, interacts with HSP90AA1, HSP90AB1, PPP5C, ROCK1 and ROCK2.

Regulates centrosome duplication, probably by inhibiting the kinase activity of ROCK2. Proposed to act as co-chaperone for HSP90. May play a role in the regulation of NOD1 via a HSP90 chaperone complex. In vitro, has intrinsic chaperone activity. This function may be achieved by inhibiting association of ROCK2 with NPM1. Plays a role in ensuring the localization of the tyrosine kinase receptor EGFR to the plasma membrane, and thus ensures the subsequent regulation of EGFR activity and EGF-induced actin cytoskeleton remodeling. Involved in stress response. Prevents tumorigenesis. The sequence is that of Cysteine and histidine-rich domain-containing protein 1 (CHORDC1) from Bos taurus (Bovine).